Here is a 218-residue protein sequence, read N- to C-terminus: Cytidylate kinase (218 aa).

11–19 (GPGASGKGT) serves as a coordination point for ATP.

Belongs to the cytidylate kinase family. Type 1 subfamily.

The protein resides in the cytoplasm. The catalysed reaction is CMP + ATP = CDP + ADP. The enzyme catalyses dCMP + ATP = dCDP + ADP. This Neisseria meningitidis serogroup B (strain ATCC BAA-335 / MC58) protein is Cytidylate kinase.